We begin with the raw amino-acid sequence, 267 residues long: Hydroxyethylthiazole kinase (267 aa).

M46 contributes to the substrate binding site. Positions 122 and 168 each coordinate ATP. G195 provides a ligand contact to substrate.

This sequence belongs to the Thz kinase family. The cofactor is Mg(2+).

The enzyme catalyses 5-(2-hydroxyethyl)-4-methylthiazole + ATP = 4-methyl-5-(2-phosphooxyethyl)-thiazole + ADP + H(+). The protein operates within cofactor biosynthesis; thiamine diphosphate biosynthesis; 4-methyl-5-(2-phosphoethyl)-thiazole from 5-(2-hydroxyethyl)-4-methylthiazole: step 1/1. Catalyzes the phosphorylation of the hydroxyl group of 4-methyl-5-beta-hydroxyethylthiazole (THZ). The chain is Hydroxyethylthiazole kinase from Nitratidesulfovibrio vulgaris (strain DP4) (Desulfovibrio vulgaris).